The chain runs to 82 residues: Defensin-like protein 7 (82 aa).

The signal sequence occupies residues 1 to 29; sequence MKSSTTSMQLIPTLFFLTILLASPEMVEG. Q30 carries the pyrrolidone carboxylic acid modification. Cystine bridges form between C33/C77, C44/C64, C50/C71, and C54/C73.

Belongs to the DEFL family. In terms of tissue distribution, expressed in stems, roots, rosette leaves and flower buds.

The protein resides in the secreted. The polypeptide is Defensin-like protein 7 (LCR75) (Arabidopsis thaliana (Mouse-ear cress)).